A 374-amino-acid chain; its full sequence is DNA-directed RNA polymerase subunit alpha (374 aa).

The tract at residues Met1–Asp257 is alpha N-terminal domain (alpha-NTD). Positions Lys274–Gly374 are alpha C-terminal domain (alpha-CTD).

It belongs to the RNA polymerase alpha chain family. In terms of assembly, homodimer. The RNAP catalytic core consists of 2 alpha, 1 beta, 1 beta' and 1 omega subunit. When a sigma factor is associated with the core the holoenzyme is formed, which can initiate transcription.

It carries out the reaction RNA(n) + a ribonucleoside 5'-triphosphate = RNA(n+1) + diphosphate. In terms of biological role, DNA-dependent RNA polymerase catalyzes the transcription of DNA into RNA using the four ribonucleoside triphosphates as substrates. This chain is DNA-directed RNA polymerase subunit alpha, found in Chlamydia pneumoniae (Chlamydophila pneumoniae).